The sequence spans 142 residues: MSSSIVLSNNNSNSNSMSMIGQSPPCCSDVPNTPASEEMTRMVKNVVASWEWVPLGKDKVGIIIPADQDHRQVHKSRFVDLLEFCDETMKVKEVIAVFGRADLTVAAGFPRTLRYVGFRVVAPENFPPTLDATTHFAMTYVV.

Residues 1-19 show a composition bias toward low complexity; the sequence is MSSSIVLSNNNSNSNSMSM. Positions 1-34 are disordered; it reads MSSSIVLSNNNSNSNSMSMIGQSPPCCSDVPNTP.

It belongs to the ODC antizyme family. Interacts with ODC1 and thereby sterically blocks ODC homodimerization.

In terms of biological role, ornithine decarboxylase (ODC) antizyme protein that negatively regulates ODC activity and intracellular polyamine biosynthesis and uptake in response to increased intracellular polyamine levels. Binds to ODC monomers, inhibiting the assembly of the functional ODC homodimer, and targets the monomers for ubiquitin-independent proteolytic destruction by the 26S proteasome. This Pristionchus pacificus (Parasitic nematode) protein is Ornithine decarboxylase antizyme.